A 738-amino-acid polypeptide reads, in one-letter code: Catalase-peroxidase 2 (738 aa).

Residues 1–26 (MKRTLPTLSALALSMSLALAAGQTQA) form the signal peptide. A cross-link (tryptophyl-tyrosyl-methioninium (Trp-Tyr) (with M-252)) is located at residues 104 to 226 (WHSAGVYRIF…LGATQMGLIY (123 aa)). Residue His-105 is the Proton acceptor of the active site. The segment at residues 226 to 252 (YVNPEGPNGVPDPLAAARDIRETFGRM) is a cross-link (tryptophyl-tyrosyl-methioninium (Tyr-Met) (with W-104)). Residue His-267 participates in heme b binding.

It belongs to the peroxidase family. Peroxidase/catalase subfamily. As to quaternary structure, homodimer or homotetramer. It depends on heme b as a cofactor. Formation of the three residue Trp-Tyr-Met cross-link is important for the catalase, but not the peroxidase activity of the enzyme.

It carries out the reaction H2O2 + AH2 = A + 2 H2O. It catalyses the reaction 2 H2O2 = O2 + 2 H2O. Bifunctional enzyme with both catalase and broad-spectrum peroxidase activity. The chain is Catalase-peroxidase 2 from Shewanella amazonensis (strain ATCC BAA-1098 / SB2B).